The sequence spans 1357 residues: DNA-directed RNA polymerase subunit beta (1357 aa).

Belongs to the RNA polymerase beta chain family. As to quaternary structure, the RNAP catalytic core consists of 2 alpha, 1 beta, 1 beta' and 1 omega subunit. When a sigma factor is associated with the core the holoenzyme is formed, which can initiate transcription.

It carries out the reaction RNA(n) + a ribonucleoside 5'-triphosphate = RNA(n+1) + diphosphate. In terms of biological role, DNA-dependent RNA polymerase catalyzes the transcription of DNA into RNA using the four ribonucleoside triphosphates as substrates. The protein is DNA-directed RNA polymerase subunit beta of Pseudomonas putida (strain W619).